The primary structure comprises 298 residues: Lactose transport system permease protein LacF (298 aa).

The next 6 helical transmembrane spans lie at 17 to 37 (GWLF…YPIL), 77 to 97 (VIFF…LAAM), 112 to 132 (MIFL…KSMF), 151 to 171 (PIGW…AITW), 208 to 228 (AFLT…TSTI), and 269 to 289 (FSYA…LSFL). Residues 73–290 (LQNTVIFFVV…LMVAVLSFLQ (218 aa)) form the ABC transmembrane type-1 domain.

The protein belongs to the binding-protein-dependent transport system permease family. MalFG subfamily.

Its subcellular location is the cell inner membrane. Functionally, part of the binding-protein-dependent transport system for lactose. Probably responsible for the translocation of the substrate across the membrane. The protein is Lactose transport system permease protein LacF (lacF) of Rhizobium radiobacter (Agrobacterium tumefaciens).